Here is a 201-residue protein sequence, read N- to C-terminus: Transmembrane 4 L6 family member 18 (201 aa).

Topologically, residues 1–9 (MGSRKCGSC) are cytoplasmic. The chain crosses the membrane as a helical span at residues 10–30 (LSSLLIPLALWSIIVNILLYF). The Extracellular segment spans residues 31–49 (PNGQASYASSNKLTNYVWY). Residues 50-70 (FEGICFSGIMMLVVAAVLLVL) form a helical membrane-spanning segment. Over 71–93 (ENDNNYKCCQSENCSKKYMTVLS) the chain is Cytoplasmic. The chain crosses the membrane as a helical span at residues 94 to 114 (MIFSALGIAFSGYCLVISALG). Residues 115-157 (LLQGPYCRTLDGWEYAFEGTAGRFLTDSREWIQCLEPAHVVEW) lie on the Extracellular side of the membrane. A helical membrane pass occupies residues 158–178 (NIILFSILIALSGLQVIVCLI). At 179–201 (RVVIQLSKSLCGTYSVIIQPGII) the chain is on the cytoplasmic side.

It belongs to the L6 tetraspanin family.

It is found in the membrane. This chain is Transmembrane 4 L6 family member 18 (TM4SF18), found in Bos taurus (Bovine).